Consider the following 707-residue polypeptide: Protein kinase C-like 1B (707 aa).

The C2 domain maps to 1-114 (MLFTGTVRVR…KIGSANDIWV (114 aa)). 2 Phorbol-ester/DAG-type zinc fingers span residues 170 to 220 (GHKF…VWKC) and 248 to 298 (PHRF…ANNC). A disordered region spans residues 323–368 (SKKKPSIMTDTSTDISGSSNSENSGYLQQISEDDSGTTSSRSASKV). The segment covering 330 to 365 (MTDTSTDISGSSNSENSGYLQQISEDDSGTTSSRSA) has biased composition (polar residues). The Protein kinase domain maps to 378–638 (FTFMKVLGKG…EDAIRAHPFF (261 aa)). Residues 384–392 (LGKGSFGKV) and lysine 407 each bind ATP. Aspartate 502 acts as the Proton acceptor in catalysis. One can recognise an AGC-kinase C-terminal domain in the interval 639 to 707 (REIDWDALES…FSFINPHFTY (69 aa)).

This sequence belongs to the protein kinase superfamily. AGC Ser/Thr protein kinase family. PKC subfamily. In terms of tissue distribution, expressed selectively in neurons that receive, transmit and process environmental signals.

It is found in the membrane. Its subcellular location is the cytoplasm. It localises to the cytoskeleton. It catalyses the reaction L-seryl-[protein] + ATP = O-phospho-L-seryl-[protein] + ADP + H(+). The enzyme catalyses L-threonyl-[protein] + ATP = O-phospho-L-threonyl-[protein] + ADP + H(+). Functionally, PKC is activated by diacylglycerol which in turn phosphorylates a range of cellular proteins. PKC also serves as the receptor for phorbol esters, a class of tumor promoters. Involved in neuropeptide secretion in motor axons. Likely to act via the extracellular signal-regulated kinase/mitogen-activated protein kinase (ERK/MAPK) pathway in the signaling response to various sensory neurons; temperature, odor, taste, and osmolality. Its role in regulation differs depending on the neuron in which it is acting; thermosensation in AFD neurons, osmolality in ASH neurons, olfactory perception in AWA and AWC neurons. Promotes dauer formation mediated by the insulin/IGF pathway. Required for resistance to antimitotic toxins. This chain is Protein kinase C-like 1B, found in Caenorhabditis elegans.